A 534-amino-acid polypeptide reads, in one-letter code: NAD(P)H-quinone oxidoreductase subunit 2 (534 aa).

14 helical membrane-spanning segments follow: residues 15 to 35, 42 to 62, 79 to 99, 109 to 129, 132 to 152, 167 to 187, 210 to 230, 244 to 264, 280 to 300, 306 to 326, 334 to 354, 378 to 398, 410 to 432, and 466 to 486; these read ILPE…DLIL, WIGY…YFQW, LSIV…LMSI, LAEF…LSGA, LVMI…LTGY, LLIG…LYGL, LGLV…ISAA, PTPV…ALAI, FVFT…ALAQ, MLAY…IAGT, IFYL…IILF, LGLS…GFFG, GLYW…YIRV, and VGLV…NPLF.

Belongs to the complex I subunit 2 family. NDH-1 can be composed of about 15 different subunits; different subcomplexes with different compositions have been identified which probably have different functions.

It localises to the cellular thylakoid membrane. It carries out the reaction a plastoquinone + NADH + (n+1) H(+)(in) = a plastoquinol + NAD(+) + n H(+)(out). It catalyses the reaction a plastoquinone + NADPH + (n+1) H(+)(in) = a plastoquinol + NADP(+) + n H(+)(out). NDH-1 shuttles electrons from an unknown electron donor, via FMN and iron-sulfur (Fe-S) centers, to quinones in the respiratory and/or the photosynthetic chain. The immediate electron acceptor for the enzyme in this species is believed to be plastoquinone. Couples the redox reaction to proton translocation, and thus conserves the redox energy in a proton gradient. Cyanobacterial NDH-1 also plays a role in inorganic carbon-concentration. This chain is NAD(P)H-quinone oxidoreductase subunit 2, found in Nostoc punctiforme (strain ATCC 29133 / PCC 73102).